The primary structure comprises 399 residues: Glutathione S-transferase LANCL1 (399 aa).

Position 2 is an N-acetylalanine (A2). K142 is modified (N6-acetyllysine). Position 276 (C276) interacts with Zn(2+). Residue K317 participates in glutathione binding. Zn(2+) contacts are provided by C322 and H323. Residue 364 to 367 participates in glutathione binding; that stretch reads RTPD.

This sequence belongs to the LanC-like protein family. As to quaternary structure, interacts with the C-terminal of STOM. Interacts with the EPS8 SH3 domain. Interaction with EPS8 is inhibited by glutathione binding. In terms of assembly, (Microbial infection) Interacts with P.falciparum SBP1. As to expression, detected in erythrocytes, brain, kidney, testis, ovary, heart, lung, placenta and spleen (at protein level). Ubiquitous. Strongly expressed in brain, spinal cord, pituitary gland, kidney, heart, skeletal muscle, pancreas, ovary and testis.

The protein localises to the cytoplasm. The protein resides in the cell membrane. The catalysed reaction is RX + glutathione = an S-substituted glutathione + a halide anion + H(+). The enzyme catalyses 1-chloro-2,4-dinitrobenzene + glutathione = 2,4-dinitrophenyl-S-glutathione + chloride + H(+). Functions as a glutathione transferase. Catalyzes conjugation of the glutathione (GSH) to artificial substrates 1-chloro-2,4-dinitrobenzene (CDNB) and p-nitrophenyl acetate. Mitigates neuronal oxidative stress during normal postnatal development and in response to oxidative stresses probably through GSH antioxidant defense mechanism. May play a role in EPS8 signaling. Binds glutathione. This is Glutathione S-transferase LANCL1 from Homo sapiens (Human).